The chain runs to 367 residues: Germination protease (367 aa).

Residues 1–15 (MKEPLDLSKYSVRTD) constitute a propeptide that is removed on maturation.

It belongs to the peptidase A25 family. In terms of assembly, homotetramer. Post-translationally, autoproteolytically processed. The inactive tetrameric zymogen termed p46 autoprocesses to a smaller form termed p41, which is active only during spore germination.

The enzyme catalyses Endopeptidase action with P4 Glu or Asp, P1 preferably Glu &gt; Asp, P1' hydrophobic and P2' Ala.. Its function is as follows. Initiates the rapid degradation of small, acid-soluble proteins during spore germination. This Bacillus cereus (strain AH187) protein is Germination protease.